Consider the following 562-residue polypeptide: RNA N(6)-adenosine-methyltransferase METTL16 (562 aa).

The tract at residues 17-20 is RNA-binding; the sequence is PPDF. S-adenosyl-L-methionine contacts are provided by R82, G110, S114, E133, T164, and N184. The K-loop stretch occupies residues 163-167; that stretch reads KTLLM. RNA-binding stretches follow at residues 199–211, 250–254, and 277–283; these read SRNP…SSVN, GKKCS, and QGRTMRW. A VCR 1 region spans residues 289 to 400; it reads FYDDVTVPSP…QLREVPRAPE (112 aa). S329 bears the Phosphoserine mark. A compositionally biased stretch (basic and acidic residues) spans 402–413; it reads VIQALEEKKPTP. The interval 402–498 is disordered; sequence VIQALEEKKP…DQEASEQFGS (97 aa). Residues 458–467 show a composition bias toward acidic residues; sequence ENPEPTEDER. A Phosphothreonine modification is found at T463. Positions 480–496 are enriched in polar residues; it reads CQGSSNGAQDQEASEQF. The tract at residues 514-562 is VCR 2; sequence YLFKCLINVKKEVDDALVEMHWVEGQNRDLMNQLCTYIRNQIFRLVAVN.

It belongs to the methyltransferase superfamily. METTL16/RlmF family. In terms of assembly, interacts with MEPCE. Interacts with LARP7.

Its subcellular location is the nucleus. The protein resides in the cytoplasm. It carries out the reaction adenosine in U6 snRNA + S-adenosyl-L-methionine = N(6)-methyladenosine in U6 snRNA + S-adenosyl-L-homocysteine + H(+). It catalyses the reaction an adenosine in mRNA + S-adenosyl-L-methionine = an N(6)-methyladenosine in mRNA + S-adenosyl-L-homocysteine + H(+). With respect to regulation, methyltransferase activity is autoinhibited by the K-loop region that blocks S-adenosyl-L-methionine-binding. Upon activation, K-loop changes conformation, allowing S-adenosyl-L-methionine-binding and subsequent methyltransferase activity. mRNA N6-adenosine-methyltransferase activity is inhibited by zinc. RNA N6-methyltransferase that methylates adenosine residues at the N(6) position of a subset of RNAs and is involved in S-adenosyl-L-methionine homeostasis by regulating expression of MAT2A transcripts. Able to N6-methylate a subset of mRNAs and U6 small nuclear RNAs (U6 snRNAs). In contrast to the METTL3-METTL14 heterodimer, only able to methylate a limited number of RNAs: requires both a 5'UACAGAGAA-3' nonamer sequence and a specific RNA structure. Plays a key role in S-adenosyl-L-methionine homeostasis by mediating N6-methylation of MAT2A mRNAs, altering splicing of MAT2A transcripts: in presence of S-adenosyl-L-methionine, binds the 3'-UTR region of MAT2A mRNA and specifically N6-methylates the first hairpin of MAT2A mRNA, preventing recognition of their 3'-splice site by U2AF1/U2AF35, thereby inhibiting splicing and protein production of S-adenosylmethionine synthase. In S-adenosyl-L-methionine-limiting conditions, binds the 3'-UTR region of MAT2A mRNA but stalls due to the lack of a methyl donor, preventing N6-methylation and promoting expression of MAT2A. In addition to mRNAs, also able to mediate N6-methylation of U6 small nuclear RNA (U6 snRNA): specifically N6-methylates adenine in position 43 of U6 snRNAs. Also able to bind various lncRNAs, such as 7SK snRNA (7SK RNA) or 7SL RNA. Specifically binds the 3'-end of the MALAT1 long non-coding RNA. This Homo sapiens (Human) protein is RNA N(6)-adenosine-methyltransferase METTL16.